The primary structure comprises 616 residues: Dihydroxy-acid dehydratase (616 aa).

Residue D81 participates in Mg(2+) binding. C122 lines the [2Fe-2S] cluster pocket. Residues D123 and K124 each contribute to the Mg(2+) site. K124 bears the N6-carboxylysine mark. Residue C195 coordinates [2Fe-2S] cluster. Mg(2+) is bound at residue E491. S517 functions as the Proton acceptor in the catalytic mechanism.

It belongs to the IlvD/Edd family. In terms of assembly, homodimer. Requires [2Fe-2S] cluster as cofactor. It depends on Mg(2+) as a cofactor.

The enzyme catalyses (2R)-2,3-dihydroxy-3-methylbutanoate = 3-methyl-2-oxobutanoate + H2O. It catalyses the reaction (2R,3R)-2,3-dihydroxy-3-methylpentanoate = (S)-3-methyl-2-oxopentanoate + H2O. The protein operates within amino-acid biosynthesis; L-isoleucine biosynthesis; L-isoleucine from 2-oxobutanoate: step 3/4. Its pathway is amino-acid biosynthesis; L-valine biosynthesis; L-valine from pyruvate: step 3/4. Functions in the biosynthesis of branched-chain amino acids. Catalyzes the dehydration of (2R,3R)-2,3-dihydroxy-3-methylpentanoate (2,3-dihydroxy-3-methylvalerate) into 2-oxo-3-methylpentanoate (2-oxo-3-methylvalerate) and of (2R)-2,3-dihydroxy-3-methylbutanoate (2,3-dihydroxyisovalerate) into 2-oxo-3-methylbutanoate (2-oxoisovalerate), the penultimate precursor to L-isoleucine and L-valine, respectively. The protein is Dihydroxy-acid dehydratase of Salmonella dublin (strain CT_02021853).